A 149-amino-acid chain; its full sequence is Placenta growth factor (149 aa).

An N-terminal signal peptide occupies residues 1 to 18 (MPTVRLFTCFLQLLTGLV). N-linked (GlcNAc...) asparagine glycosylation occurs at Asn33. 3 disulfide bridges follow: Cys52–Cys94, Cys83–Cys128, and Cys87–Cys130. An N-linked (GlcNAc...) asparagine glycan is attached at Asn101.

This sequence belongs to the PDGF/VEGF growth factor family. In terms of assembly, antiparallel homodimer; disulfide-linked. Also found as heterodimer with VEGFA/VEGF.

The protein resides in the secreted. Growth factor active in angiogenesis and endothelial cell growth, stimulating their proliferation and migration. It binds to the receptor FLT1/VEGFR-1. Also promotes cell tumor growth. This chain is Placenta growth factor (PGF), found in Bos taurus (Bovine).